Reading from the N-terminus, the 568-residue chain is Putative U-box domain-containing protein 55 (568 aa).

Residues 217–464 (QSESDRNDQL…KVAAEKDAAS (248 aa)) adopt a coiled-coil conformation. Positions 496-568 (QPPSYFICPI…AIQEWLQRNS (73 aa)) constitute a U-box domain.

The enzyme catalyses S-ubiquitinyl-[E2 ubiquitin-conjugating enzyme]-L-cysteine + [acceptor protein]-L-lysine = [E2 ubiquitin-conjugating enzyme]-L-cysteine + N(6)-ubiquitinyl-[acceptor protein]-L-lysine.. It functions in the pathway protein modification; protein ubiquitination. In terms of biological role, functions as an E3 ubiquitin ligase. In Arabidopsis thaliana (Mouse-ear cress), this protein is Putative U-box domain-containing protein 55 (PUB55).